A 37-amino-acid polypeptide reads, in one-letter code: Chorion class CB protein PCH12 (37 aa).

Residues 1 to 26 (DGIFPTVGAGDVWYGCGDGAVGIVAE) are central domain. A right arm region spans residues 27-37 (TPFASTTTNPA).

This sequence belongs to the chorion protein family.

Its function is as follows. This protein is one of many from the eggshell of the silk moth. This chain is Chorion class CB protein PCH12, found in Antheraea polyphemus (Polyphemus moth).